Here is a 390-residue protein sequence, read N- to C-terminus: Endothelial cell-selective adhesion molecule (390 aa).

Residues 1-29 (MISLPGPLVTNLLRFLFLGLSALAPPSRA) form the signal peptide. The Ig-like V-type domain maps to 30–143 (ELQLHLPANQ…NGQASGHSIK (114 aa)). Residues 30-248 (ELQLHLPANQ…LEVSTGPGAA (219 aa)) are Extracellular-facing. N-linked (GlcNAc...) asparagine glycosylation is found at Asn-108, Asn-169, Asn-213, and Asn-236. The Ig-like C2-type domain maps to 156-242 (PSCRLQGVPR…AQCNVTLEVS (87 aa)). A disulfide bridge connects residues Cys-174 and Cys-224. A helical transmembrane segment spans residues 249–269 (VVAGAVVGTLVGLGLLAGLVL). The Cytoplasmic portion of the chain corresponds to 270–390 (LYHRRGKALE…PAQSQAGSLV (121 aa)). Phosphoserine is present on Ser-301. The segment at 316 to 365 (ARALRPPHGPPRPGALTPTPSLSSQALPSPRLPTTDGANPQPISLIPGGV) is disordered. Phosphothreonine is present on residues Thr-332 and Thr-334. Over residues 333–342 (PTPSLSSQAL) the composition is skewed to polar residues. 4 positions are modified to phosphoserine: Ser-336, Ser-339, Ser-344, and Ser-371.

In terms of assembly, interacts with MAGI1.

It is found in the cell junction. It localises to the adherens junction. Its subcellular location is the tight junction. The protein resides in the cell membrane. Functionally, can mediate aggregation most likely through a homophilic molecular interaction. The polypeptide is Endothelial cell-selective adhesion molecule (ESAM) (Macaca fascicularis (Crab-eating macaque)).